The chain runs to 181 residues: NAD(P)H-quinone oxidoreductase subunit I, chloroplastic (181 aa).

2 consecutive 4Fe-4S ferredoxin-type domains span residues 55 to 84 and 95 to 124; these read GRIH…VDWE and KNYS…MTEE. [4Fe-4S] cluster is bound by residues cysteine 64, cysteine 67, cysteine 70, cysteine 74, cysteine 104, cysteine 107, cysteine 110, and cysteine 114.

Belongs to the complex I 23 kDa subunit family. NDH is composed of at least 16 different subunits, 5 of which are encoded in the nucleus. The cofactor is [4Fe-4S] cluster.

Its subcellular location is the plastid. It localises to the chloroplast thylakoid membrane. It catalyses the reaction a plastoquinone + NADH + (n+1) H(+)(in) = a plastoquinol + NAD(+) + n H(+)(out). It carries out the reaction a plastoquinone + NADPH + (n+1) H(+)(in) = a plastoquinol + NADP(+) + n H(+)(out). Functionally, NDH shuttles electrons from NAD(P)H:plastoquinone, via FMN and iron-sulfur (Fe-S) centers, to quinones in the photosynthetic chain and possibly in a chloroplast respiratory chain. The immediate electron acceptor for the enzyme in this species is believed to be plastoquinone. Couples the redox reaction to proton translocation, and thus conserves the redox energy in a proton gradient. In Angiopteris evecta (Mule's foot fern), this protein is NAD(P)H-quinone oxidoreductase subunit I, chloroplastic.